A 539-amino-acid chain; its full sequence is Chaperonin GroEL 1 (539 aa).

Residues 29-32 (TLGP), 86-90 (DGTTT), G413, and D495 contribute to the ATP site.

The protein belongs to the chaperonin (HSP60) family. Forms a cylinder of 14 subunits composed of two heptameric rings stacked back-to-back. Interacts with the co-chaperonin GroES.

It localises to the cytoplasm. The catalysed reaction is ATP + H2O + a folded polypeptide = ADP + phosphate + an unfolded polypeptide.. Together with its co-chaperonin GroES, plays an essential role in assisting protein folding. The GroEL-GroES system forms a nano-cage that allows encapsulation of the non-native substrate proteins and provides a physical environment optimized to promote and accelerate protein folding. This chain is Chaperonin GroEL 1, found in Mycobacterium bovis (strain ATCC BAA-935 / AF2122/97).